The chain runs to 608 residues: Epsin-3 (608 aa).

A 1,2-diacyl-sn-glycero-3-phospho-(1D-myo-inositol-4,5-bisphosphate) contacts are provided by Arg8, Lys11, Arg25, Asn30, Arg63, and His73. Residues Asn12–Arg144 enclose the ENTH domain. 2 disordered regions span residues Thr150–Ile266 and Ser281–Ala475. A compositionally biased stretch (low complexity) spans Gly174–Ala189. Phosphoserine is present on residues Ser184 and Ser185. The UIM domain occupies Glu202–Gly221. 2 stretches are compositionally biased toward basic and acidic residues: residues Ser214–Asp229 and Gly240–Lys260. Tandem repeats lie at residues Asp287–Trp289, Asp310–Trp312, Glu337–Trp339, Asp353–Trp355, Asp370–Trp372, Asn495–Phe497, and Asn508–Phe510. Residues Asp287–Trp372 form a 5 X 3 AA repeats of [DE]-P-W region. Positions Pro346–Lys363 are enriched in pro residues. The 3 X 3 AA repeats of N-P-F stretch occupies residues Asn495–Phe607. 2 disordered regions span residues Leu498 to Leu530 and Gly575 to Leu608. A compositionally biased stretch (pro residues) spans Ala578–Leu588. Repeat 3 spans residues Asn605–Phe607.

It belongs to the epsin family.

Its subcellular location is the cytoplasm. The protein localises to the cell cortex. The protein resides in the perinuclear region. It is found in the cytoplasmic vesicle. It localises to the clathrin-coated vesicle. Its subcellular location is the nucleus. The chain is Epsin-3 (Epn3) from Rattus norvegicus (Rat).